A 189-amino-acid chain; its full sequence is Frataxin-like protein, mitochondrial (189 aa).

Residues 1–50 constitute a mitochondrion transit peptide; the sequence is MNCARLHQRIPLRAMALTTTSYPALAPSHSFANASTSVMTASAMAVAHRA.

This sequence belongs to the frataxin family. In terms of assembly, interacts with IscU; the interaction is direct.

It is found in the mitochondrion. It catalyses the reaction 4 Fe(2+) + O2 + 4 H(+) = 4 Fe(3+) + 2 H2O. Its function is as follows. Iron-binding protein which binds 2 iron atoms per monomer. Probably, acts as an iron carrier for the biosynthesis of Fe-S clusters. Stimulates the cysteine desulphurase activity of IscS in the presence of IscU. The polypeptide is Frataxin-like protein, mitochondrial (Leishmania donovani).